The chain runs to 437 residues: Probable D-serine dehydratase (437 aa).

At Lys106 the chain carries N6-(pyridoxal phosphate)lysine.

The protein belongs to the serine/threonine dehydratase family. DsdA subfamily. Requires pyridoxal 5'-phosphate as cofactor.

It carries out the reaction D-serine = pyruvate + NH4(+). This Hahella chejuensis (strain KCTC 2396) protein is Probable D-serine dehydratase.